The chain runs to 151 residues: Cytochrome c-type biogenesis protein CcmE (151 aa).

Residues 1-9 (MKGLKKKRR) lie on the Cytoplasmic side of the membrane. The helical; Signal-anchor for type II membrane protein transmembrane segment at 10-30 (IQIIALAFVALAGSTALIGYA) threads the bilayer. The Periplasmic segment spans residues 31–151 (MRDGINFFRS…FQHTEDQPQG (121 aa)). Residues histidine 123 and tyrosine 127 each coordinate heme.

This sequence belongs to the CcmE/CycJ family.

It localises to the cell inner membrane. In terms of biological role, heme chaperone required for the biogenesis of c-type cytochromes. Transiently binds heme delivered by CcmC and transfers the heme to apo-cytochromes in a process facilitated by CcmF and CcmH. This is Cytochrome c-type biogenesis protein CcmE from Cereibacter sphaeroides (strain ATCC 17029 / ATH 2.4.9) (Rhodobacter sphaeroides).